The chain runs to 206 residues: Large ribosomal subunit protein uL4 (206 aa).

Residues 48–78 form a disordered region; sequence THSVKTRGHVSGGGAKPWRQKGTGRARAGSN.

It belongs to the universal ribosomal protein uL4 family. Part of the 50S ribosomal subunit.

Functionally, one of the primary rRNA binding proteins, this protein initially binds near the 5'-end of the 23S rRNA. It is important during the early stages of 50S assembly. It makes multiple contacts with different domains of the 23S rRNA in the assembled 50S subunit and ribosome. In terms of biological role, forms part of the polypeptide exit tunnel. The sequence is that of Large ribosomal subunit protein uL4 from Lawsonia intracellularis (strain PHE/MN1-00).